We begin with the raw amino-acid sequence, 572 residues long: Proline--tRNA ligase (572 aa).

Belongs to the class-II aminoacyl-tRNA synthetase family. ProS type 1 subfamily. As to quaternary structure, homodimer.

It is found in the cytoplasm. The enzyme catalyses tRNA(Pro) + L-proline + ATP = L-prolyl-tRNA(Pro) + AMP + diphosphate. In terms of biological role, catalyzes the attachment of proline to tRNA(Pro) in a two-step reaction: proline is first activated by ATP to form Pro-AMP and then transferred to the acceptor end of tRNA(Pro). As ProRS can inadvertently accommodate and process non-cognate amino acids such as alanine and cysteine, to avoid such errors it has two additional distinct editing activities against alanine. One activity is designated as 'pretransfer' editing and involves the tRNA(Pro)-independent hydrolysis of activated Ala-AMP. The other activity is designated 'posttransfer' editing and involves deacylation of mischarged Ala-tRNA(Pro). The misacylated Cys-tRNA(Pro) is not edited by ProRS. The polypeptide is Proline--tRNA ligase (Salmonella choleraesuis (strain SC-B67)).